The sequence spans 77 residues: Large ribosomal subunit protein uL29 (77 aa).

This sequence belongs to the universal ribosomal protein uL29 family.

The polypeptide is Large ribosomal subunit protein uL29 (Corynebacterium urealyticum (strain ATCC 43042 / DSM 7109)).